The primary structure comprises 504 residues: Ribose import ATP-binding protein RbsA (504 aa).

2 consecutive ABC transporter domains span residues 6–242 (LELN…VGRR) and 250–495 (IDVQ…VGKT). 38-45 (GENGAGKS) is an ATP binding site.

Belongs to the ABC transporter superfamily. Ribose importer (TC 3.A.1.2.1) family. The complex is composed of an ATP-binding protein (RbsA), two transmembrane proteins (RbsC) and a solute-binding protein (RbsB).

Its subcellular location is the cell inner membrane. The enzyme catalyses D-ribose(out) + ATP + H2O = D-ribose(in) + ADP + phosphate + H(+). In terms of biological role, part of the ABC transporter complex RbsABC involved in ribose import. Responsible for energy coupling to the transport system. The protein is Ribose import ATP-binding protein RbsA of Aliivibrio fischeri (strain ATCC 700601 / ES114) (Vibrio fischeri).